Consider the following 312-residue polypeptide: Malate dehydrogenase (312 aa).

NAD(+)-binding positions include 7–13 (GAAGGIG) and D34. Positions 81 and 87 each coordinate substrate. NAD(+)-binding positions include N94 and 117-119 (ITN). 2 residues coordinate substrate: N119 and R153. The active-site Proton acceptor is the H177. M227 lines the NAD(+) pocket.

This sequence belongs to the LDH/MDH superfamily. MDH type 1 family. As to quaternary structure, homodimer.

It carries out the reaction (S)-malate + NAD(+) = oxaloacetate + NADH + H(+). In terms of biological role, catalyzes the reversible oxidation of malate to oxaloacetate. This Citrobacter koseri (strain ATCC BAA-895 / CDC 4225-83 / SGSC4696) protein is Malate dehydrogenase.